We begin with the raw amino-acid sequence, 349 residues long: MSQEKERLISGKLVTDDAKLDTSLRPRCLPDFIGQKRLKDNLGVAIQAAKQRGEALDHVLLYGPPGLGKTTLSHIIALEMGVNIRITSGPAIERQGDLAAILTNLKPFDILFIDEIHRLSRNVEEVLYPAMEDYALDIMVGKGPGARSLRLKLPHFTLIGATTRYAMLSAPLRDRFGSIFRLDFYDEEAIHDIVRRSARILGVEADENGLHQIACRSRGTPRVANRLLRRVRDYAQVKGNGLITADIAAESLACLEVDKLGLDEIDHKVLKTIIHKFGGGPVGLETIAAAISEEADTIMDVYEPYLLQLGFLERTPRGRQATRLAYQHLSIPYQNDKNNQQGLWTENGS.

The large ATPase domain (RuvB-L) stretch occupies residues 1–185; it reads MSQEKERLIS…FGSIFRLDFY (185 aa). ATP is bound by residues Leu24, Arg25, Gly66, Lys69, Thr70, Thr71, 132-134, Arg175, Tyr185, and Arg222; that span reads EDY. Position 70 (Thr70) interacts with Mg(2+). Residues 186–256 form a small ATPAse domain (RuvB-S) region; it reads DEEAIHDIVR…IAAESLACLE (71 aa). The head domain (RuvB-H) stretch occupies residues 259-349; it reads KLGLDEIDHK…QQGLWTENGS (91 aa). Residues Arg314 and Arg319 each coordinate DNA.

Belongs to the RuvB family. In terms of assembly, homohexamer. Forms an RuvA(8)-RuvB(12)-Holliday junction (HJ) complex. HJ DNA is sandwiched between 2 RuvA tetramers; dsDNA enters through RuvA and exits via RuvB. An RuvB hexamer assembles on each DNA strand where it exits the tetramer. Each RuvB hexamer is contacted by two RuvA subunits (via domain III) on 2 adjacent RuvB subunits; this complex drives branch migration. In the full resolvosome a probable DNA-RuvA(4)-RuvB(12)-RuvC(2) complex forms which resolves the HJ.

The protein localises to the cytoplasm. The catalysed reaction is ATP + H2O = ADP + phosphate + H(+). Its function is as follows. The RuvA-RuvB-RuvC complex processes Holliday junction (HJ) DNA during genetic recombination and DNA repair, while the RuvA-RuvB complex plays an important role in the rescue of blocked DNA replication forks via replication fork reversal (RFR). RuvA specifically binds to HJ cruciform DNA, conferring on it an open structure. The RuvB hexamer acts as an ATP-dependent pump, pulling dsDNA into and through the RuvAB complex. RuvB forms 2 homohexamers on either side of HJ DNA bound by 1 or 2 RuvA tetramers; 4 subunits per hexamer contact DNA at a time. Coordinated motions by a converter formed by DNA-disengaged RuvB subunits stimulates ATP hydrolysis and nucleotide exchange. Immobilization of the converter enables RuvB to convert the ATP-contained energy into a lever motion, pulling 2 nucleotides of DNA out of the RuvA tetramer per ATP hydrolyzed, thus driving DNA branch migration. The RuvB motors rotate together with the DNA substrate, which together with the progressing nucleotide cycle form the mechanistic basis for DNA recombination by continuous HJ branch migration. Branch migration allows RuvC to scan DNA until it finds its consensus sequence, where it cleaves and resolves cruciform DNA. In Dehalococcoides mccartyi (strain CBDB1), this protein is Holliday junction branch migration complex subunit RuvB.